The following is a 272-amino-acid chain: 2-succinyl-6-hydroxy-2,4-cyclohexadiene-1-carboxylate synthase (272 aa).

The protein belongs to the AB hydrolase superfamily. MenH family. In terms of assembly, monomer.

It carries out the reaction 5-enolpyruvoyl-6-hydroxy-2-succinyl-cyclohex-3-ene-1-carboxylate = (1R,6R)-6-hydroxy-2-succinyl-cyclohexa-2,4-diene-1-carboxylate + pyruvate. Its pathway is quinol/quinone metabolism; 1,4-dihydroxy-2-naphthoate biosynthesis; 1,4-dihydroxy-2-naphthoate from chorismate: step 3/7. The protein operates within quinol/quinone metabolism; menaquinone biosynthesis. In terms of biological role, catalyzes a proton abstraction reaction that results in 2,5-elimination of pyruvate from 2-succinyl-5-enolpyruvyl-6-hydroxy-3-cyclohexene-1-carboxylate (SEPHCHC) and the formation of 2-succinyl-6-hydroxy-2,4-cyclohexadiene-1-carboxylate (SHCHC). This is 2-succinyl-6-hydroxy-2,4-cyclohexadiene-1-carboxylate synthase from Yersinia pseudotuberculosis serotype I (strain IP32953).